Here is a 43-residue protein sequence, read N- to C-terminus: Metallothionein B (43 aa).

Positions 1–16 are beta; the sequence is SCAGSCKCKNCRCRSC. A divalent metal cation is bound by residues Cys-2, Cys-6, Cys-8, Cys-11, Cys-13, Cys-16, Cys-20, Cys-21, Cys-23, Cys-24, Cys-28, Cys-31, Cys-35, and Cys-37. Residues 17–43 are alpha; sequence RKSCCSCCPAGCNNCVKGCVCKEPASS.

It belongs to the metallothionein superfamily. Type 1 family.

Its function is as follows. Metallothioneins have a high content of cysteine residues that bind various heavy metals. The polypeptide is Metallothionein B (Colinus virginianus (Northern bobwhite)).